The primary structure comprises 60 residues: UPF0337 protein SACOL1680 (60 aa).

This sequence belongs to the UPF0337 (CsbD) family.

The protein is UPF0337 protein SACOL1680 of Staphylococcus aureus (strain COL).